A 768-amino-acid chain; its full sequence is Calcium up-regulated protein G (768 aa).

The interval 1–22 (MINIEDISKSSNQSEEKQLKST) is disordered. Ricin B-type lectin domains lie at 1–107 (MINI…WTID) and 100–248 (KTQI…WGIN).

This sequence belongs to the cup family.

It localises to the cytoplasm. It is found in the membrane. In terms of biological role, may play an important role in stabilizing and/or regulating the cell membrane during Ca(2+) stress or certain stages of development. This chain is Calcium up-regulated protein G (cupG), found in Dictyostelium discoideum (Social amoeba).